The chain runs to 407 residues: Heparan-sulfate 6-O-sulfotransferase 1-B (407 aa).

Over 8–14 (MVERTSK) the chain is Cytoplasmic. The chain crosses the membrane as a helical; Signal-anchor for type II membrane protein span at residues 15-35 (FLLIVVGSVFFMLILYQYVAP). At 36-407 (GVINFGSPHG…DYMNHIINGW (372 aa)) the chain is on the lumenal side. 92 to 100 (HIQKTGGTT) is a binding site for 3'-phosphoadenylyl sulfate. Substrate-binding positions include 122–123 (KK), R139, W144, and H149. The active-site Proton acceptor is H149. Residues R183 and S191 each contribute to the 3'-phosphoadenylyl sulfate site. The substrate site is built by H195 and W202. N-linked (GlcNAc...) asparagine glycosylation is present at N262. 315–317 (MQY) serves as a coordination point for 3'-phosphoadenylyl sulfate. The N-linked (GlcNAc...) asparagine glycan is linked to N318. Residue 321–322 (RA) participates in 3'-phosphoadenylyl sulfate binding. N329 is a glycosylation site (N-linked (GlcNAc...) asparagine).

Belongs to the sulfotransferase 6 family. In terms of tissue distribution, during early somitogenesis, first expressed in floor plate and somites. During mid-somitogenesis, expressed strongly in somites and more weakly in eye and hindbrain. During late somitogenesis, expressed in eye, hindbrain and posterior somites. At 24 hours post-fertilization (hpf), expressed in lens, forebrain, hindbrain, otic vesicle, anterior spinal cord neurons and posterior somites. At 36 hpf, expressed in the retinal ciliary marginal zone, brain, pancreas and weakly in pectoral fin. At 48 hpf, expressed in the retinal ciliary marginal zone, retinal ganglion cells, rhombomeres, otic vesicle and weakly in pectoral fin.

It is found in the membrane. It catalyses the reaction alpha-D-glucosaminyl-[heparan sulfate](n) + 3'-phosphoadenylyl sulfate = 6-sulfo-alpha-D-glucosaminyl-[heparan sulfate](n) + adenosine 3',5'-bisphosphate + H(+). In terms of biological role, 6-O-sulfation enzyme which catalyzes the transfer of sulfate from 3'-phosphoadenosine 5'-phosphosulfate (PAPS) to position 6 of the N-sulfoglucosamine residue (GlcNS) of heparan sulfate. This Danio rerio (Zebrafish) protein is Heparan-sulfate 6-O-sulfotransferase 1-B.